The following is a 237-amino-acid chain: Sugar fermentation stimulation protein homolog (237 aa).

It belongs to the SfsA family.

This is Sugar fermentation stimulation protein homolog from Pseudomonas putida (strain ATCC 47054 / DSM 6125 / CFBP 8728 / NCIMB 11950 / KT2440).